Here is a 156-residue protein sequence, read N- to C-terminus: Large ribosomal subunit protein uL15 (156 aa).

Over residues 1-11 (MKLNDLRDKPG) the composition is skewed to basic and acidic residues. The tract at residues 1-40 (MKLNDLRDKPGSVKARKRVGRGIGSGTGKTGGRGVKGQKS) is disordered. A compositionally biased stretch (gly residues) spans 21-35 (RGIGSGTGKTGGRGV).

Belongs to the universal ribosomal protein uL15 family. In terms of assembly, part of the 50S ribosomal subunit.

Binds to the 23S rRNA. The protein is Large ribosomal subunit protein uL15 of Brucella anthropi (strain ATCC 49188 / DSM 6882 / CCUG 24695 / JCM 21032 / LMG 3331 / NBRC 15819 / NCTC 12168 / Alc 37) (Ochrobactrum anthropi).